A 152-amino-acid polypeptide reads, in one-letter code: Arginine repressor (152 aa).

Belongs to the ArgR family.

The protein resides in the cytoplasm. The protein operates within amino-acid biosynthesis; L-arginine biosynthesis [regulation]. Regulates arginine biosynthesis genes. The sequence is that of Arginine repressor from Caldicellulosiruptor bescii (strain ATCC BAA-1888 / DSM 6725 / KCTC 15123 / Z-1320) (Anaerocellum thermophilum).